Reading from the N-terminus, the 389-residue chain is Succinyl-diaminopimelate desuccinylase (389 aa).

H75 is a Zn(2+) binding site. D77 is a catalytic residue. Zn(2+) is bound at residue D108. E142 acts as the Proton acceptor in catalysis. Positions 143, 171, and 357 each coordinate Zn(2+).

This sequence belongs to the peptidase M20A family. DapE subfamily. Homodimer. Zn(2+) is required as a cofactor. The cofactor is Co(2+).

The catalysed reaction is N-succinyl-(2S,6S)-2,6-diaminopimelate + H2O = (2S,6S)-2,6-diaminopimelate + succinate. The protein operates within amino-acid biosynthesis; L-lysine biosynthesis via DAP pathway; LL-2,6-diaminopimelate from (S)-tetrahydrodipicolinate (succinylase route): step 3/3. In terms of biological role, catalyzes the hydrolysis of N-succinyl-L,L-diaminopimelic acid (SDAP), forming succinate and LL-2,6-diaminopimelate (DAP), an intermediate involved in the bacterial biosynthesis of lysine and meso-diaminopimelic acid, an essential component of bacterial cell walls. This chain is Succinyl-diaminopimelate desuccinylase, found in Paracidovorax citrulli (strain AAC00-1) (Acidovorax citrulli).